A 282-amino-acid polypeptide reads, in one-letter code: tRNA pseudouridine synthase A (282 aa).

Aspartate 51 functions as the Nucleophile in the catalytic mechanism. Substrate is bound at residue tyrosine 109.

It belongs to the tRNA pseudouridine synthase TruA family. In terms of assembly, homodimer.

It catalyses the reaction uridine(38/39/40) in tRNA = pseudouridine(38/39/40) in tRNA. In terms of biological role, formation of pseudouridine at positions 38, 39 and 40 in the anticodon stem and loop of transfer RNAs. The chain is tRNA pseudouridine synthase A from Delftia acidovorans (strain DSM 14801 / SPH-1).